The following is a 247-amino-acid chain: Carboxy-S-adenosyl-L-methionine synthase (247 aa).

S-adenosyl-L-methionine contacts are provided by residues Y39, G64 to S66, D89 to N90, D117 to I118, N132, and R199.

It belongs to the class I-like SAM-binding methyltransferase superfamily. Cx-SAM synthase family. Homodimer.

The enzyme catalyses prephenate + S-adenosyl-L-methionine = carboxy-S-adenosyl-L-methionine + 3-phenylpyruvate + H2O. In terms of biological role, catalyzes the conversion of S-adenosyl-L-methionine (SAM) to carboxy-S-adenosyl-L-methionine (Cx-SAM). This Pectobacterium atrosepticum (strain SCRI 1043 / ATCC BAA-672) (Erwinia carotovora subsp. atroseptica) protein is Carboxy-S-adenosyl-L-methionine synthase.